Consider the following 425-residue polypeptide: Cysteate synthase (425 aa).

At lysine 106 the chain carries N6-(pyridoxal phosphate)lysine. Pyridoxal 5'-phosphate-binding residues include asparagine 132 and threonine 382.

This sequence belongs to the threonine synthase family. Cysteate synthase subfamily. As to quaternary structure, homotrimer. The cofactor is pyridoxal 5'-phosphate.

The catalysed reaction is O-phospho-L-serine + sulfite + H(+) = L-cysteate + phosphate. The protein operates within cofactor biosynthesis; coenzyme M biosynthesis. In terms of biological role, specifically catalyzes the beta-elimination of phosphate from L-phosphoserine and the beta-addition of sulfite to the dehydroalanine intermediate to produce L-cysteate. The polypeptide is Cysteate synthase (Methanosphaerula palustris (strain ATCC BAA-1556 / DSM 19958 / E1-9c)).